Consider the following 97-residue polypeptide: U6-theraphotoxin-Hhn1a 1 (97 aa).

Positions 1-33 (MLIKQFSRRSKNMKVQILLAFAALFVLAVGSYA) are cleaved as a signal peptide. The propeptide occupies 34–61 (SESKKLDLRDALFSAMFSADYQLNPQER). Cystine bridges form between cysteine 63-cysteine 77, cysteine 70-cysteine 82, and cysteine 76-cysteine 89.

It belongs to the neurotoxin 10 (Hwtx-1) family. 12 (Hntx-12) subfamily. Expressed by the venom gland.

It is found in the secreted. Functionally, ion channel inhibitor. This chain is U6-theraphotoxin-Hhn1a 1, found in Cyriopagopus hainanus (Chinese bird spider).